The primary structure comprises 1287 residues: DNA-directed RNA polymerase 147 kDa polypeptide (1287 aa).

The protein belongs to the poxviridae DNA-directed RNA polymerase 147 kDa subunit family. The DNA-dependent RNA polymerase used for intermediate and late genes expression consists of eight subunits Rpo30/OPG66, Rpo7/OPG90, Rpo22/OPG103, Rpo147/OPG105, Rpo18/OPG119, Rpo19/OPG131, Rpo132/OPG151 and Rpo35/OPG156. The same holoenzyme, with the addition of the transcription-specificity factor OPG109, is used for early gene expression.

It is found in the virion. It carries out the reaction RNA(n) + a ribonucleoside 5'-triphosphate = RNA(n+1) + diphosphate. Part of the DNA-dependent RNA polymerase which catalyzes the transcription of viral DNA into RNA using the four ribonucleoside triphosphates as substrates. Responsible for the transcription of early, intermediate and late genes. DNA-dependent RNA polymerase associates with the early transcription factor (ETF), itself composed of OPG118 and OPG133, thereby allowing the early genes transcription. Late transcription, and probably also intermediate transcription, require newly synthesized RNA polymerase. The chain is DNA-directed RNA polymerase 147 kDa polypeptide (OPG105) from Bos taurus (Bovine).